The following is a 690-amino-acid chain: Guanylate cyclase soluble subunit alpha-1 (690 aa).

A Phosphoserine modification is found at Ser266. Residues 480-607 (TMLFSDIVGF…NNVTLANKFE (128 aa)) enclose the Guanylate cyclase domain.

It belongs to the adenylyl cyclase class-4/guanylyl cyclase family. As to quaternary structure, the active enzyme is formed by a heterodimer of an alpha and a beta subunit. Heterodimer with GUCY1B1. It depends on Mg(2+) as a cofactor. The cofactor is Mn(2+).

It localises to the cytoplasm. The catalysed reaction is GTP = 3',5'-cyclic GMP + diphosphate. With respect to regulation, activated by nitric oxide in the presence of magnesium or manganese ions. This chain is Guanylate cyclase soluble subunit alpha-1 (Gucy1a1), found in Rattus norvegicus (Rat).